The primary structure comprises 738 residues: Platelet endothelial cell adhesion molecule (738 aa).

The first 27 residues, 1–27 (MQPRWAQGATMWLGVLLTLLLCSSLEG), serve as a signal peptide directing secretion. Topologically, residues 28–601 (QENSFTINSV…VRVILAPWKK (574 aa)) are extracellular. 3 consecutive Ig-like C2-type domains span residues 35 to 121 (NSVD…KTTA), 145 to 233 (GGIV…TESF), and 236 to 315 (PKFH…SKVS). Residues N52, N84, and N151 are each glycosylated (N-linked (GlcNAc...) asparagine). A disulfide bridge connects residues C57 and C109. 2 cysteine pairs are disulfide-bonded: C152/C206 and C256/C304. N-linked (GlcNAc...) asparagine glycans are attached at residues N301, N320, N344, N356, N453, and N551. Ig-like C2-type domains follow at residues 328 to 401 (PELE…NTVQ), 424 to 493 (GQTI…EVLR), and 499 to 591 (PVDE…KILT). Intrachain disulfides connect C347–C386, C431–C476, and C523–C572. A helical membrane pass occupies residues 602–620 (GLIAVVIIGVIIALLIIAA). The Cytoplasmic segment spans residues 621 to 738 (KCYFLRKAKA…SRTEGSLDGT (118 aa)). A lipid anchor (S-palmitoyl cysteine) is attached at C622. The segment at 658–715 (EANSHYGHNDDVRNHAMKPINDNKEPLNSDVQYTEVQVSSAESHKDLGKKDTETVYSE) is disordered. A compositionally biased stretch (polar residues) spans 686-698 (SDVQYTEVQVSSA). 2 short sequence motifs (ITIM motif) span residues 688 to 693 (VQYTEV) and 711 to 716 (TVYSEV). Residues Y690 and Y713 each carry the phosphotyrosine; by FER modification. Positions 699–715 (ESHKDLGKKDTETVYSE) are enriched in basic and acidic residues. A membrane-bound segment which detaches upon phosphorylation region spans residues 709 to 729 (TETVYSEVRKAVPDAVESRYS). Residues 721 to 738 (PDAVESRYSRTEGSLDGT) form a may play a role in cytoprotective signaling region. S729 and S734 each carry phosphoserine.

In terms of assembly, trans-homodimer (via Ig-like C2-type 1 and Ig-like C2-type 2 domains); trans-homodimerization is required for cell-cell interaction. Forms a complex with BDKRB2 and GNAQ. Interacts with BDKRB2 and GNAQ. Interacts with PTPN11; Tyr-713 is critical for PTPN11 recruitment. Interacts with FER. Interacts (via Ig-like C2-type domain 6) with CD177; the interaction is Ca(2+)-dependent; the interaction is direct. Phosphorylated on Ser and Tyr residues after cellular activation by src kinases. Upon activation, phosphorylated on Ser-729 which probably initiates the dissociation of the membrane-interaction segment (residues 709-729) from the cell membrane allowing the sequential phosphorylation of Tyr-713 and Tyr-690. Constitutively phosphorylated on Ser-734 in resting platelets. Phosphorylated on tyrosine residues by FER and FES in response to FCER1 activation. In endothelial cells Fyn mediates mechanical-force (stretch or pull) induced tyrosine phosphorylation. In terms of processing, palmitoylation by ZDHHC21 is necessary for cell surface expression in endothelial cells and enrichment in membrane rafts. Expressed on platelets and leukocytes and is primarily concentrated at the borders between endothelial cells. Expressed in human umbilical vein endothelial cells (HUVECs) (at protein level). Expressed on neutrophils (at protein level). Isoform Long predominates in all tissues examined. Isoform Delta12 is detected only in trachea. Isoform Delta14-15 is only detected in lung. Isoform Delta14 is detected in all tissues examined with the strongest expression in heart. Isoform Delta15 is expressed in brain, testis, ovary, cell surface of platelets, human umbilical vein endothelial cells (HUVECs), Jurkat T-cell leukemia, human erythroleukemia (HEL) and U-937 histiocytic lymphoma cell lines (at protein level).

It is found in the cell membrane. The protein resides in the membrane raft. The protein localises to the cell junction. Cell adhesion molecule which is required for leukocyte transendothelial migration (TEM) under most inflammatory conditions. Tyr-690 plays a critical role in TEM and is required for efficient trafficking of PECAM1 to and from the lateral border recycling compartment (LBRC) and is also essential for the LBRC membrane to be targeted around migrating leukocytes. Trans-homophilic interaction may play a role in endothelial cell-cell adhesion via cell junctions. Heterophilic interaction with CD177 plays a role in transendothelial migration of neutrophils. Homophilic ligation of PECAM1 prevents macrophage-mediated phagocytosis of neighboring viable leukocytes by transmitting a detachment signal. Promotes macrophage-mediated phagocytosis of apoptotic leukocytes by tethering them to the phagocytic cells; PECAM1-mediated detachment signal appears to be disabled in apoptotic leukocytes. Modulates bradykinin receptor BDKRB2 activation. Regulates bradykinin- and hyperosmotic shock-induced ERK1/2 activation in endothelial cells. Induces susceptibility to atherosclerosis. Its function is as follows. Does not protect against apoptosis. The sequence is that of Platelet endothelial cell adhesion molecule (PECAM1) from Homo sapiens (Human).